Consider the following 484-residue polypeptide: Protein nucleotidyltransferase YdiU (484 aa).

Residues G81, G83, R84, K103, D115, G116, R166, and R173 each coordinate ATP. D244 serves as the catalytic Proton acceptor. The Mg(2+) site is built by N245 and D254. D254 is a binding site for ATP.

The protein belongs to the SELO family. It depends on Mg(2+) as a cofactor. Mn(2+) is required as a cofactor.

The enzyme catalyses L-seryl-[protein] + ATP = 3-O-(5'-adenylyl)-L-seryl-[protein] + diphosphate. It catalyses the reaction L-threonyl-[protein] + ATP = 3-O-(5'-adenylyl)-L-threonyl-[protein] + diphosphate. The catalysed reaction is L-tyrosyl-[protein] + ATP = O-(5'-adenylyl)-L-tyrosyl-[protein] + diphosphate. It carries out the reaction L-histidyl-[protein] + UTP = N(tele)-(5'-uridylyl)-L-histidyl-[protein] + diphosphate. The enzyme catalyses L-seryl-[protein] + UTP = O-(5'-uridylyl)-L-seryl-[protein] + diphosphate. It catalyses the reaction L-tyrosyl-[protein] + UTP = O-(5'-uridylyl)-L-tyrosyl-[protein] + diphosphate. Its function is as follows. Nucleotidyltransferase involved in the post-translational modification of proteins. It can catalyze the addition of adenosine monophosphate (AMP) or uridine monophosphate (UMP) to a protein, resulting in modifications known as AMPylation and UMPylation. The polypeptide is Protein nucleotidyltransferase YdiU (Shewanella loihica (strain ATCC BAA-1088 / PV-4)).